The chain runs to 34 residues: MGGEILNAAILSFGLIFVGWGLGALLLKIQGGEE.

A helical transmembrane segment spans residues 9 to 27 (AILSFGLIFVGWGLGALLL).

The protein belongs to the PetM family. In terms of assembly, the 4 large subunits of the cytochrome b6-f complex are cytochrome b6, subunit IV (17 kDa polypeptide, PetD), cytochrome f and the Rieske protein, while the 4 small subunits are PetG, PetL, PetM and PetN. The complex functions as a dimer.

It localises to the cellular thylakoid membrane. Functionally, component of the cytochrome b6-f complex, which mediates electron transfer between photosystem II (PSII) and photosystem I (PSI), cyclic electron flow around PSI, and state transitions. In Nostoc punctiforme (strain ATCC 29133 / PCC 73102), this protein is Cytochrome b6-f complex subunit 7.